The following is a 72-amino-acid chain: Protein SlyX homolog (72 aa).

This sequence belongs to the SlyX family.

This is Protein SlyX homolog from Bradyrhizobium diazoefficiens (strain JCM 10833 / BCRC 13528 / IAM 13628 / NBRC 14792 / USDA 110).